The following is a 173-amino-acid chain: Putative metal-dependent hydrolase BCE33L2441 (173 aa).

3 residues coordinate Zn(2+): His-65, His-156, and His-160.

The protein belongs to the metal hydrolase YfiT family. As to quaternary structure, homodimer. It depends on Zn(2+) as a cofactor.

It is found in the cytoplasm. Possible metal-dependent hydrolase. The chain is Putative metal-dependent hydrolase BCE33L2441 from Bacillus cereus (strain ZK / E33L).